The primary structure comprises 418 residues: Inhibitor of growth protein 3 (418 aa).

Residues 127-165 (DTPSQPVNNHHAHSHTPVEKRKYNPTSHHTTTDHIPEKK) form a disordered region. Residues lysine 148, lysine 165, and lysine 167 each participate in a glycyl lysine isopeptide (Lys-Gly) (interchain with G-Cter in SUMO2) cross-link. Residues 156–165 (TTTDHIPEKK) show a composition bias toward basic and acidic residues. Lysine 181 carries the post-translational modification N6-acetyllysine. Lysine 256 participates in a covalent cross-link: Glycyl lysine isopeptide (Lys-Gly) (interchain with G-Cter in SUMO2). Position 264 is an N6-acetyllysine (lysine 264). The segment at 286–325 (TQNASSSAADSRSGRKSKNNNKSSSQQSSSSSSSSSLSSC) is disordered. The segment covering 305 to 325 (NNKSSSQQSSSSSSSSSLSSC) has biased composition (low complexity). Residues 360–409 (PRYCICNQVSYGEMVGCDNQDCPIEWFHYGCVGLTEAPKGKWYCPQCTAA) form a PHD-type zinc finger. Residues cysteine 363, cysteine 365, cysteine 376, cysteine 381, histidine 387, cysteine 390, cysteine 403, and cysteine 406 each coordinate Zn(2+).

It belongs to the ING family. As to quaternary structure, interacts with H3K4me3 and to a lesser extent with H3K4me2. Component of the NuA4 histone acetyltransferase complex which contains the catalytic subunit KAT5/TIP60 and the subunits EP400, TRRAP/PAF400, BRD8/SMAP, EPC1, DMAP1/DNMAP1, RUVBL1/TIP49, RUVBL2, ING3, actin, ACTL6A/BAF53A, MORF4L1/MRG15, MORF4L2/MRGX, MRGBP, YEATS4/GAS41, VPS72/YL1 and MEAF6. The NuA4 complex interacts with MYC and the adenovirus E1A protein. HTATTIP/TIP60, EPC1, and ING3 together constitute a minimal HAT complex termed Piccolo NuA4. Component of a SWR1-like complex. In terms of tissue distribution, expressed in brain, heart, kidney, liver, lung, ovaries, placenta, prostate, skeletal muscle, small intestine, spleen, testis and thymus.

It localises to the nucleus. Component of the NuA4 histone acetyltransferase (HAT) complex which is involved in transcriptional activation of select genes principally by acetylation of nucleosomal histones H4 and H2A. This modification may both alter nucleosome - DNA interactions and promote interaction of the modified histones with other proteins which positively regulate transcription. This complex may be required for the activation of transcriptional programs associated with oncogene and proto-oncogene mediated growth induction, tumor suppressor mediated growth arrest and replicative senescence, apoptosis, and DNA repair. NuA4 may also play a direct role in DNA repair when directly recruited to sites of DNA damage. Component of a SWR1-like complex that specifically mediates the removal of histone H2A.Z/H2AZ1 from the nucleosome. This is Inhibitor of growth protein 3 (ING3) from Homo sapiens (Human).